The following is a 208-amino-acid chain: Ribosomal RNA large subunit methyltransferase E (208 aa).

Residues glycine 63, tryptophan 65, aspartate 83, aspartate 99, and aspartate 124 each contribute to the S-adenosyl-L-methionine site. The active-site Proton acceptor is lysine 164.

It belongs to the class I-like SAM-binding methyltransferase superfamily. RNA methyltransferase RlmE family.

It localises to the cytoplasm. It catalyses the reaction uridine(2552) in 23S rRNA + S-adenosyl-L-methionine = 2'-O-methyluridine(2552) in 23S rRNA + S-adenosyl-L-homocysteine + H(+). Its function is as follows. Specifically methylates the uridine in position 2552 of 23S rRNA at the 2'-O position of the ribose in the fully assembled 50S ribosomal subunit. This Hamiltonella defensa subsp. Acyrthosiphon pisum (strain 5AT) protein is Ribosomal RNA large subunit methyltransferase E.